The chain runs to 202 residues: UPF0316 protein SH1041 (202 aa).

3 helical membrane passes run 8–28, 40–60, and 66–86; these read PWSM…FLTM, MAAA…GMVM, and IQNI…GMKI.

This sequence belongs to the UPF0316 family.

The protein localises to the cell membrane. The polypeptide is UPF0316 protein SH1041 (Staphylococcus haemolyticus (strain JCSC1435)).